The primary structure comprises 287 residues: Very long chain fatty acid elongase 4 (287 aa).

3 consecutive transmembrane segments (helical) span residues 33–53, 64–84, and 115–135; these read ILVYCCVLYILLVFMVPEHIM, PFVVWNIGLCLFSICGAYSCV, and FWVFYFILSKIPEMIDTVFLV. Positions 145-149 match the HxxHH motif motif; sequence HWYHH. The active-site Nucleophile is His148. Helical transmembrane passes span 150 to 170, 172 to 192, 199 to 219, and 241 to 261; these read LTVAIFCWHAGHALIPSGLWF, TMNYCVHSIMYFYYFMCACGM, IAPFITMMQLLQMVAGTLIVL, and LGLVMYGSYFFLFAVLFGKLY.

The protein belongs to the ELO family.

The protein localises to the membrane. It catalyses the reaction a very-long-chain acyl-CoA + malonyl-CoA + H(+) = a very-long-chain 3-oxoacyl-CoA + CO2 + CoA. Involved in the synthesis of fatty acids. Elongates C16:0 and C18:0 fatty acids to C26:0, with C24:0 being the main product. This Trypanosoma cruzi (strain CL Brener) protein is Very long chain fatty acid elongase 4.